The chain runs to 114 residues: Cystatin Pr15a (114 aa).

The N-terminal stretch at 1-22 is a signal peptide; it reads MFTVKLLAFMVVAVSLQHLAEA. Residues 29–83 enclose the Cystatin domain; that stretch reads GCPVEVDPNREDIKKSLAHVMAAKNSPDELVRIIKASTQVVNGIKYKVVFEVKNP.

Belongs to the cystatin family. Expressed by the venom gland (anterior main gland) (at protein level).

Its subcellular location is the secreted. This Platymeris rhadamanthus (Red spot assassin bug) protein is Cystatin Pr15a.